Here is a 165-residue protein sequence, read N- to C-terminus: Cyclic pyranopterin monophosphate synthase (165 aa).

Substrate-binding positions include 83-85 and 120-121; these read FCH and ME. Asp135 is a catalytic residue.

Belongs to the MoaC family. In terms of assembly, homohexamer; trimer of dimers.

It catalyses the reaction (8S)-3',8-cyclo-7,8-dihydroguanosine 5'-triphosphate = cyclic pyranopterin phosphate + diphosphate. The protein operates within cofactor biosynthesis; molybdopterin biosynthesis. Catalyzes the conversion of (8S)-3',8-cyclo-7,8-dihydroguanosine 5'-triphosphate to cyclic pyranopterin monophosphate (cPMP). In Xanthomonas oryzae pv. oryzae (strain MAFF 311018), this protein is Cyclic pyranopterin monophosphate synthase.